The primary structure comprises 350 residues: Kievitone hydratase (350 aa).

A signal peptide spans 1 to 19; sequence MMISSVLVAGVVAVSAALA.

Homodimer. Glycosylated.

The protein resides in the secreted. The catalysed reaction is kievitone hydrate = kievitone + H2O. In terms of biological role, converts fungitoxic kievitone to the less toxic kievitone hydrate, and thereby protects the pathogenic fungus against this phytoalexin. This Fusarium solani subsp. phaseoli (Nectria haematococca) protein is Kievitone hydratase (khs).